Reading from the N-terminus, the 229-residue chain is UPF0319 protein Sbal223_2728 (229 aa).

The first 21 residues, 1-21 (MKSLLPISSLLVLLGSASAFA), serve as a signal peptide directing secretion.

Belongs to the UPF0319 family.

The sequence is that of UPF0319 protein Sbal223_2728 from Shewanella baltica (strain OS223).